A 293-amino-acid chain; its full sequence is Ribosomal protein L11 methyltransferase (293 aa).

4 residues coordinate S-adenosyl-L-methionine: Thr-145, Gly-166, Asp-188, and Asn-230.

This sequence belongs to the methyltransferase superfamily. PrmA family.

Its subcellular location is the cytoplasm. It catalyses the reaction L-lysyl-[protein] + 3 S-adenosyl-L-methionine = N(6),N(6),N(6)-trimethyl-L-lysyl-[protein] + 3 S-adenosyl-L-homocysteine + 3 H(+). In terms of biological role, methylates ribosomal protein L11. The protein is Ribosomal protein L11 methyltransferase of Enterobacter sp. (strain 638).